The primary structure comprises 153 residues: Ribosomal RNA large subunit methyltransferase H (153 aa).

S-adenosyl-L-methionine is bound by residues leucine 70, glycine 102, and 121–126 (LSRMTF).

This sequence belongs to the RNA methyltransferase RlmH family. In terms of assembly, homodimer.

The protein resides in the cytoplasm. It catalyses the reaction pseudouridine(1915) in 23S rRNA + S-adenosyl-L-methionine = N(3)-methylpseudouridine(1915) in 23S rRNA + S-adenosyl-L-homocysteine + H(+). Functionally, specifically methylates the pseudouridine at position 1915 (m3Psi1915) in 23S rRNA. This chain is Ribosomal RNA large subunit methyltransferase H, found in Geobacter sulfurreducens (strain ATCC 51573 / DSM 12127 / PCA).